The primary structure comprises 78 residues: Probable [Fe-S]-dependent transcriptional repressor (78 aa).

Residues Cys56, Cys61, Cys64, and Cys70 each contribute to the iron-sulfur cluster site.

It belongs to the FeoC family.

Its function is as follows. May function as a transcriptional regulator that controls feoABC expression. The sequence is that of Probable [Fe-S]-dependent transcriptional repressor from Escherichia coli O17:K52:H18 (strain UMN026 / ExPEC).